We begin with the raw amino-acid sequence, 211 residues long: Pyridoxine/pyridoxamine 5'-phosphate oxidase (211 aa).

Residues 7 to 10 (RREY) and Lys-65 each bind substrate. FMN-binding positions include 60–65 (RIVLLK), 75–76 (YT), Arg-81, Lys-82, and Gln-104. Positions 122, 126, and 130 each coordinate substrate. Residues 139 to 140 (QS) and Trp-184 each bind FMN. 190–192 (RLH) is a substrate binding site. Residue Arg-194 participates in FMN binding.

It belongs to the pyridoxamine 5'-phosphate oxidase family. As to quaternary structure, homodimer. FMN serves as cofactor.

The catalysed reaction is pyridoxamine 5'-phosphate + O2 + H2O = pyridoxal 5'-phosphate + H2O2 + NH4(+). It carries out the reaction pyridoxine 5'-phosphate + O2 = pyridoxal 5'-phosphate + H2O2. The protein operates within cofactor metabolism; pyridoxal 5'-phosphate salvage; pyridoxal 5'-phosphate from pyridoxamine 5'-phosphate: step 1/1. It functions in the pathway cofactor metabolism; pyridoxal 5'-phosphate salvage; pyridoxal 5'-phosphate from pyridoxine 5'-phosphate: step 1/1. Functionally, catalyzes the oxidation of either pyridoxine 5'-phosphate (PNP) or pyridoxamine 5'-phosphate (PMP) into pyridoxal 5'-phosphate (PLP). The polypeptide is Pyridoxine/pyridoxamine 5'-phosphate oxidase (Vibrio cholerae serotype O1 (strain ATCC 39541 / Classical Ogawa 395 / O395)).